Consider the following 70-residue polypeptide: DNA-directed RNA polymerase subunit omega (70 aa).

The protein belongs to the RNA polymerase subunit omega family. The RNAP catalytic core consists of 2 alpha, 1 beta, 1 beta' and 1 omega subunit. When a sigma factor is associated with the core the holoenzyme is formed, which can initiate transcription.

It catalyses the reaction RNA(n) + a ribonucleoside 5'-triphosphate = RNA(n+1) + diphosphate. In terms of biological role, promotes RNA polymerase assembly. Latches the N- and C-terminal regions of the beta' subunit thereby facilitating its interaction with the beta and alpha subunits. The sequence is that of DNA-directed RNA polymerase subunit omega from Methylobacillus flagellatus (strain ATCC 51484 / DSM 6875 / VKM B-1610 / KT).